Here is a 255-residue protein sequence, read N- to C-terminus: tRNA (guanine-N(1)-)-methyltransferase (255 aa).

Residues Gly-117 and 137–142 each bind S-adenosyl-L-methionine; that span reads LGDFVL.

The protein belongs to the RNA methyltransferase TrmD family. Homodimer.

Its subcellular location is the cytoplasm. It carries out the reaction guanosine(37) in tRNA + S-adenosyl-L-methionine = N(1)-methylguanosine(37) in tRNA + S-adenosyl-L-homocysteine + H(+). Functionally, specifically methylates guanosine-37 in various tRNAs. The polypeptide is tRNA (guanine-N(1)-)-methyltransferase (Paraburkholderia phymatum (strain DSM 17167 / CIP 108236 / LMG 21445 / STM815) (Burkholderia phymatum)).